The chain runs to 491 residues: Cysteine--tRNA ligase (491 aa).

Residue Cys29 coordinates Zn(2+). The 'HIGH' region motif lies at Pro31–Asn41. Zn(2+) contacts are provided by Cys227, His252, and Glu256. The 'KMSKS' region motif lies at Lys285 to Ser289. Lys288 is an ATP binding site.

It belongs to the class-I aminoacyl-tRNA synthetase family. Monomer. Zn(2+) is required as a cofactor.

The protein resides in the cytoplasm. It carries out the reaction tRNA(Cys) + L-cysteine + ATP = L-cysteinyl-tRNA(Cys) + AMP + diphosphate. The protein is Cysteine--tRNA ligase of Rhodopseudomonas palustris (strain TIE-1).